A 130-amino-acid polypeptide reads, in one-letter code: Large ribosomal subunit protein bL12 (130 aa).

This sequence belongs to the bacterial ribosomal protein bL12 family. In terms of assembly, homodimer. Part of the ribosomal stalk of the 50S ribosomal subunit. Forms a multimeric L10(L12)X complex, where L10 forms an elongated spine to which 2 to 4 L12 dimers bind in a sequential fashion. Binds GTP-bound translation factors.

Its function is as follows. Forms part of the ribosomal stalk which helps the ribosome interact with GTP-bound translation factors. Is thus essential for accurate translation. The sequence is that of Large ribosomal subunit protein bL12 from Parafrankia sp. (strain EAN1pec).